Here is a 223-residue protein sequence, read N- to C-terminus: MOB-like protein phocein (223 aa).

The tract at residues 1–23 (MTAATENRTVRRNGPGTKRADWN) is disordered. Zn(2+)-binding residues include Cys-92, Cys-97, His-169, and His-174.

Belongs to the MOB1/phocein family.

The protein resides in the cytoplasm. The protein localises to the perinuclear region. It localises to the membrane. It is found in the golgi apparatus. Its subcellular location is the golgi stack membrane. Functionally, may play a role in membrane trafficking, specifically in membrane budding reactions. This is MOB-like protein phocein from Caenorhabditis elegans.